A 255-amino-acid polypeptide reads, in one-letter code: tRNA-cytidine(32) 2-sulfurtransferase (255 aa).

A PP-loop motif motif is present at residues 37-42; the sequence is SGGKDS. [4Fe-4S] cluster is bound by residues C112, C115, and C202.

It belongs to the TtcA family. As to quaternary structure, homodimer. The cofactor is Mg(2+). [4Fe-4S] cluster serves as cofactor.

The protein localises to the cytoplasm. The catalysed reaction is cytidine(32) in tRNA + S-sulfanyl-L-cysteinyl-[cysteine desulfurase] + AH2 + ATP = 2-thiocytidine(32) in tRNA + L-cysteinyl-[cysteine desulfurase] + A + AMP + diphosphate + H(+). It participates in tRNA modification. Catalyzes the ATP-dependent 2-thiolation of cytidine in position 32 of tRNA, to form 2-thiocytidine (s(2)C32). The sulfur atoms are provided by the cysteine/cysteine desulfurase (IscS) system. The chain is tRNA-cytidine(32) 2-sulfurtransferase from Citrifermentans bemidjiense (strain ATCC BAA-1014 / DSM 16622 / JCM 12645 / Bem) (Geobacter bemidjiensis).